A 38-amino-acid chain; its full sequence is Photosystem II reaction center protein L (38 aa).

Residues 17 to 37 (SLYWGLLLIFVLAVLFSNYFF) form a helical membrane-spanning segment.

The protein belongs to the PsbL family. In terms of assembly, PSII is composed of 1 copy each of membrane proteins PsbA, PsbB, PsbC, PsbD, PsbE, PsbF, PsbH, PsbI, PsbJ, PsbK, PsbL, PsbM, PsbT, PsbX, PsbY, PsbZ, Psb30/Ycf12, at least 3 peripheral proteins of the oxygen-evolving complex and a large number of cofactors. It forms dimeric complexes.

It is found in the plastid. Its subcellular location is the chloroplast thylakoid membrane. One of the components of the core complex of photosystem II (PSII). PSII is a light-driven water:plastoquinone oxidoreductase that uses light energy to abstract electrons from H(2)O, generating O(2) and a proton gradient subsequently used for ATP formation. It consists of a core antenna complex that captures photons, and an electron transfer chain that converts photonic excitation into a charge separation. This subunit is found at the monomer-monomer interface and is required for correct PSII assembly and/or dimerization. This Adiantum capillus-veneris (Maidenhair fern) protein is Photosystem II reaction center protein L.